Consider the following 66-residue polypeptide: Large ribosomal subunit protein bL33c (66 aa).

The protein belongs to the bacterial ribosomal protein bL33 family.

The protein resides in the plastid. The chain is Large ribosomal subunit protein bL33c (rpl33) from Epifagus virginiana (Beechdrops).